The sequence spans 824 residues: FT-interacting protein 1 (824 aa).

3 C2 domains span residues 48–170 (WLGL…PQWY), 217–341 (VRGE…SRWF), and 385–522 (YISD…THAY). The next 3 helical transmembrane spans lie at 625–645 (AVSL…VCHW), 657–677 (LLLI…LYMF), and 764–784 (ATCL…VTPF).

This sequence belongs to the MCTP family. In terms of assembly, interacts with RFT1 and PI4KG4. In terms of tissue distribution, specifically expressed in the phloem including companion cells.

It is found in the endoplasmic reticulum membrane. Involved in the export of the long day-specific flower-promoting signal (florigen) RFT1 from the phloem companion cells to sieve elements. Promotes flowering under long days through the transport of RFT1 from the leaves to the shoot apical meristem (SAM). This Oryza sativa subsp. japonica (Rice) protein is FT-interacting protein 1.